The chain runs to 271 residues: MASKDAQNQRRGLPGFLPGAPDPDQSLPASSNPGNQAWQLSLPLPSSFLPTVSLPPGLEYLSQLDLIIIHQQVELLGMILGTETSNKYEIKNSLGQRIYFAVEESICFNRTFCSTLRSCTLRITDNSGREVITVNRPLRCNSCWCPCYLQELEIQAPPGTIVGYVTQKWDPFLPKFTIQNANKEDILKIVGPCVTCGCFGDVDFEVKTINEKLTIGKISKYWSGFVNDVFTNADNFGIHVPADLDVTVKAAMIGACFLFDFMFFEHSLAGL.

Positions 1–10 (MASKDAQNQR) are enriched in polar residues. The disordered stretch occupies residues 1 to 33 (MASKDAQNQRRGLPGFLPGAPDPDQSLPASSNP). The segment at 1–45 (MASKDAQNQRRGLPGFLPGAPDPDQSLPASSNPGNQAWQLSLPLP) is proline-rich domain (PRD).

Belongs to the phospholipid scramblase family.

The protein is Phospholipid scramblase family member 5 (PLSCR5) of Homo sapiens (Human).